The following is a 1374-amino-acid chain: DNA-directed RNA polymerase subunit beta' (1374 aa).

C71, C73, C86, and C89 together coordinate Zn(2+). Mg(2+) is bound by residues D462, D464, and D466. Positions 810, 884, 891, and 894 each coordinate Zn(2+).

The protein belongs to the RNA polymerase beta' chain family. In terms of assembly, the RNAP catalytic core consists of 2 alpha, 1 beta, 1 beta' and 1 omega subunit. When a sigma factor is associated with the core the holoenzyme is formed, which can initiate transcription. Requires Mg(2+) as cofactor. It depends on Zn(2+) as a cofactor.

The catalysed reaction is RNA(n) + a ribonucleoside 5'-triphosphate = RNA(n+1) + diphosphate. Its function is as follows. DNA-dependent RNA polymerase catalyzes the transcription of DNA into RNA using the four ribonucleoside triphosphates as substrates. The protein is DNA-directed RNA polymerase subunit beta' of Rickettsia massiliae (strain Mtu5).